The sequence spans 301 residues: Protoheme IX farnesyltransferase (301 aa).

The next 9 helical transmembrane spans lie at 20-42 (FTEL…GMWL), 55-75 (VDVI…SGAF), 105-125 (ALMV…MTTW), 126-146 (QAGV…SLYA), 150-172 (LVSN…WFAV), 176-198 (FSIV…FYAI), 227-247 (MFFW…LGLV), 249-269 (VILA…GFKM), and 280-300 (FVYS…ISIF).

It belongs to the UbiA prenyltransferase family. Protoheme IX farnesyltransferase subfamily. In terms of assembly, interacts with CtaA.

Its subcellular location is the cell membrane. The catalysed reaction is heme b + (2E,6E)-farnesyl diphosphate + H2O = Fe(II)-heme o + diphosphate. The protein operates within porphyrin-containing compound metabolism; heme O biosynthesis; heme O from protoheme: step 1/1. Its function is as follows. Converts heme B (protoheme IX) to heme O by substitution of the vinyl group on carbon 2 of heme B porphyrin ring with a hydroxyethyl farnesyl side group. The protein is Protoheme IX farnesyltransferase of Listeria innocua serovar 6a (strain ATCC BAA-680 / CLIP 11262).